Reading from the N-terminus, the 133-residue chain is MALEKLTPAAGSTHATKRIGRGQGSGNGKTAGKGNKGQRARKGYNEKRGFEGGQQPLQRRLPKVGFASKFEKPYVINVEKIAAIKELAEISIATIASVHKISKSVTKIKLIGASAKALASKIKDENVSVSGTK.

Residues 1-57 (MALEKLTPAAGSTHATKRIGRGQGSGNGKTAGKGNKGQRARKGYNEKRGFEGGQQPL) are disordered. Over residues 21–35 (RGQGSGNGKTAGKGN) the composition is skewed to gly residues.

This sequence belongs to the universal ribosomal protein uL15 family. Part of the 50S ribosomal subunit.

Binds to the 23S rRNA. The protein is Large ribosomal subunit protein uL15 of Campylobacter concisus (strain 13826).